The primary structure comprises 759 residues: uncharacterized protein (759 aa).

2 disordered regions span residues 269–328 (SQRV…GEEP) and 406–759 (LPLR…AQTA). Positions 289 to 299 (AGGKEEAERGG) are enriched in basic and acidic residues. Over residues 406–415 (LPLRPPSGSG) the composition is skewed to low complexity. Basic and acidic residues predominate over residues 417 to 430 (AARKPGYEKEEGRG). The segment covering 431-444 (RATTASATAATSPR) has biased composition (low complexity). Basic and acidic residues-rich tracts occupy residues 469 to 518 (PESE…RGEH) and 525 to 545 (DSGREEDAQESEVARRDEKGT). A compositionally biased stretch (pro residues) spans 585–599 (WVPPPHLLFPSPLPS). Residues 659–680 (SLSSLSSSSSSSSSSSPSYSPS) are compositionally biased toward low complexity. Over residues 681–690 (PLSPPSPVSP) the composition is skewed to pro residues. Low complexity-rich tracts occupy residues 691–704 (SSPRSPFISPIRSP) and 728–746 (PPFSKRVPSVPSSASPSAP).

This is an uncharacterized protein from Human herpesvirus 6B (strain Z29) (HHV-6 variant B).